We begin with the raw amino-acid sequence, 458 residues long: MTEPKKEIIEDENHGISKKIPTDPRQYEKVTEGCRLLVMMASQEEERWAEVISRCRAANGSIKFYVHYIDCNRRLDEWVQSDRLNLASCELPKKGGKKGAHLREENRDSNENEGKKSGRKRKIPLLPMDDLKAESVDPLQAISTMTSGSTPSLRGSMSMVGHSEDAMTRIRNVECIELGRSRIQPWYFAPYPQQLTSLDCIYICEFCLKYLKSKTCLKRHMEKCAMCHPPGNQIYSHDKLSFFEIDGRKNKSYAQNLCLLAKLFLDHKTLYYDTDPFLFYVLTEEDEKGHHIVGYFSKEKESAEEYNVACILVLPPFQKKGYGSLLIEFSYELSKIEQKTGSPEKPLSDLGLLSYRSYWSMAIMKELFAFKRRHPGEDITVQDISQSTSIKREDVVSTLQQLDLYKYYKGSYIIVISDEKRQVYEKRIEAAKKKTRINPAALQWRPKEYGKKRAQIMF.

The segment at 1 to 24 (MTEPKKEIIEDENHGISKKIPTDP) is disordered. The 57-residue stretch at 30-86 (VTEGCRLLVMMASQEEERWAEVISRCRAANGSIKFYVHYIDCNRRLDEWVQSDRLNL) folds into the Tudor-knot domain. The segment at 94-123 (KGGKKGAHLREENRDSNENEGKKSGRKRKI) is disordered. The span at 101 to 116 (HLREENRDSNENEGKK) shows a compositional bias: basic and acidic residues. The region spanning 168–446 (TRIRNVECIE…INPAALQWRP (279 aa)) is the MYST-type HAT domain. A C2HC MYST-type zinc finger spans residues 201–226 (IYICEFCLKYLKSKTCLKRHMEKCAM). Lys268 carries the N6-acetyllysine; by autocatalysis modification. Acetyl-CoA-binding positions include 311–313 (ILV) and 318–324 (QKKGYGS). Glu344 serves as the catalytic Proton donor/acceptor. 2 residues coordinate acetyl-CoA: Ser348 and Ser357.

The protein belongs to the MYST (SAS/MOZ) family. In terms of assembly, interacts with transcription-associated protein trr-1. Probably a component of a complex with histone acetyltransferase (HAT) activity, at least composed of mys-1 and trr-1. Autoacetylation at Lys-268 is required for binding histones with high affinity and for proper function.

The protein localises to the nucleus. It carries out the reaction L-lysyl-[protein] + acetyl-CoA = N(6)-acetyl-L-lysyl-[protein] + CoA + H(+). Its function is as follows. Probable catalytic subunit of the Tip60 chromatin-remodeling complex. Plays a role in acetylation of nucleosomal histone H4 and perhaps also H2A, probably acting as a component of the Tip60 histone acetyltransferase complex. Acts in the determination of vulval and distal tip cell (DTC) precursor cell fates. Involved in the positive regulation of transcription factor daf-16, probably acting by histone acetylation; thereby modulating stress resistance. This Caenorhabditis elegans protein is Histone acetyltransferase Tip60 homolog.